Reading from the N-terminus, the 345-residue chain is Delta(1)-pyrroline-2-carboxylate reductase (345 aa).

The Charge relay system role is filled by S47. H48 functions as the Proton donor in the catalytic mechanism. R52 lines the substrate pocket. 121 to 125 contacts NADP(+); the sequence is HFSAL. T161 contacts substrate. An NADP(+)-binding site is contributed by 179–181; sequence DFA. 187 to 188 provides a ligand contact to substrate; sequence RG. E189 functions as the Charge relay system in the catalytic mechanism. NADP(+)-binding positions include 230–231 and 305–311; these read HK and RLPSGRR.

This sequence belongs to the LDH2/MDH2 oxidoreductase family. As to quaternary structure, homodimer.

The enzyme catalyses L-proline + NAD(+) = 1-pyrroline-2-carboxylate + NADH + H(+). It catalyses the reaction L-proline + NADP(+) = 1-pyrroline-2-carboxylate + NADPH + H(+). Functionally, catalyzes the reduction of Delta(1)-pyrroline-2-carboxylate (Pyr2C) to L-proline, using NADPH as the electron donor. Is likely involved in a degradation pathway that converts trans-3-hydroxy-L-proline (t3LHyp) to L-proline, which would allow A.tumefaciens to grow on t3LHyp as a sole carbon source. The sequence is that of Delta(1)-pyrroline-2-carboxylate reductase from Agrobacterium fabrum (strain C58 / ATCC 33970) (Agrobacterium tumefaciens (strain C58)).